The sequence spans 534 residues: Cytochrome c oxidase subunit 1 (534 aa).

Topologically, residues 1–14 (MVQRWLYSTNAKDI) are mitochondrial matrix. The helical transmembrane segment at 15–39 (AVLYFMLAIFSGMAGTAMSLIIRLE) threads the bilayer. Residues E39, A42, and G44 each contribute to the Ca(2+) site. Residues 40–54 (LAAPGSQYLHGNSQL) are Mitochondrial intermembrane-facing. A helical membrane pass occupies residues 55-88 (FNVLVVGHAVLMIFFLVMPALIGGFGNYLLPLMI). Residue H62 coordinates Fe(II)-heme a. The Mitochondrial matrix segment spans residues 89-97 (GATDTAFPR). A helical transmembrane segment spans residues 98-118 (INNIAFWVLPMGLVCLVTSTL). Topologically, residues 119–142 (VESGAGTGWTVYPPLSSIQAHSGP) are mitochondrial intermembrane. The helical transmembrane segment at 143-171 (SVDLAIFALHLTSISSLLGAINFIVTTLN) threads the bilayer. Residues 172-183 (MRTNGMTMHKLP) are Mitochondrial matrix-facing. Residues 184–215 (LFVWSIFITAFLLLLSLPVLSAGITMLLLDRN) form a helical membrane-spanning segment. Residues 216–228 (FNTSFFEVSGGGD) are Mitochondrial intermembrane-facing. A helical membrane pass occupies residues 229 to 263 (PILYEHLFWFFGHPEVYILIIPGFGIISHVVSTYS). H241 is a Cu cation binding site. A cross-link (1'-histidyl-3'-tyrosine (His-Tyr)) is located at residues 241-245 (HPEVY). Y245 provides a ligand contact to O2. Residues 264–269 (KKPVFG) are Mitochondrial matrix-facing. The chain crosses the membrane as a helical span at residues 270-295 (EISMVYAMASIGLLGFLVWSHHMYIV). 2 residues coordinate Cu cation: H290 and H291. The Mitochondrial intermembrane segment spans residues 296–298 (GLD). A helical membrane pass occupies residues 299–327 (ADTRAYFTSATMIIAIPTGIKIFSWLATI). At 328–335 (HGGSIRLA) the chain is on the mitochondrial matrix side. Residues 336–358 (TPMLYAIAFLFLFTMGGLTGVAL) traverse the membrane as a helical segment. Over 359–370 (ANASLDVAFHDT) the chain is Mitochondrial intermembrane. H368 and D369 together coordinate Mg(2+). The chain crosses the membrane as a helical span at residues 371-400 (YYVVGHFHYVLSMGAIFSLFAGYYYWSPQI). H376 provides a ligand contact to heme a3. H378 is a Fe(II)-heme a binding site. Residues 401 to 406 (LGLNYN) are Mitochondrial matrix-facing. Residues 407 to 431 (EKLAQIQFWLIFIGANVIFFPMHFL) form a helical membrane-spanning segment. Over 432–449 (GINGMPRRIPDYPDAFAG) the chain is Mitochondrial intermembrane. P441 contacts Ca(2+). Residues 450–474 (WNYVASIGSFIATLSLFLFIYILYD) traverse the membrane as a helical segment. At 475-534 (QLVNGLNNKVNNKSVIYNKAPDFVESNTIFNLNTVKSSSIEFLLTSPPAVHSFNTPAVQS) the chain is on the mitochondrial matrix side.

The protein belongs to the heme-copper respiratory oxidase family. In terms of assembly, component of the cytochrome c oxidase (complex IV, CIV), a multisubunit enzyme composed of 12 subunits. The complex is composed of a catalytic core of 3 subunits COX1, COX2 and COX3, encoded in the mitochondrial DNA, and 9 supernumerary subunits COX4, COX5A (or COX5B), COX6, COX7, COX8, COX9, COX12, COX13 and COX26, which are encoded in the nuclear genome. The complex exists as a monomer or a dimer and forms supercomplexes (SCs) in the inner mitochondrial membrane with a dimer of ubiquinol-cytochrome c oxidoreductase (cytochrome b-c1 complex, complex III, CIII), resulting in 2 different assemblies (supercomplexes III(2)IV and III(2)IV(2)). Requires heme as cofactor. It depends on Cu cation as a cofactor. The N-terminus is blocked.

The protein localises to the mitochondrion inner membrane. It carries out the reaction 4 Fe(II)-[cytochrome c] + O2 + 8 H(+)(in) = 4 Fe(III)-[cytochrome c] + 2 H2O + 4 H(+)(out). It functions in the pathway energy metabolism; oxidative phosphorylation. Functionally, component of the cytochrome c oxidase, the last enzyme in the mitochondrial electron transport chain which drives oxidative phosphorylation. The respiratory chain contains 3 multisubunit complexes succinate dehydrogenase (complex II, CII), ubiquinol-cytochrome c oxidoreductase (cytochrome b-c1 complex, complex III, CIII) and cytochrome c oxidase (complex IV, CIV), that cooperate to transfer electrons derived from NADH and succinate to molecular oxygen, creating an electrochemical gradient over the inner membrane that drives transmembrane transport and the ATP synthase. Cytochrome c oxidase is the component of the respiratory chain that catalyzes the reduction of oxygen to water. Electrons originating from reduced cytochrome c in the intermembrane space (IMS) are transferred via the dinuclear copper A center (CU(A)) of COX2 and heme A of COX1 to the active site in COX1, a binuclear center (BNC) formed by heme A3 and copper B (CU(B)). The BNC reduces molecular oxygen to 2 water molecules using 4 electrons from cytochrome c in the IMS and 4 protons from the mitochondrial matrix. COX1 is a catalytic core subunit containing heme A and the active site BNC with heme A3 and the copper atom CU(B). This chain is Cytochrome c oxidase subunit 1 (COX1), found in Saccharomyces cerevisiae (strain ATCC 204508 / S288c) (Baker's yeast).